A 439-amino-acid chain; its full sequence is Maintenance of mitochondrial morphology protein 1 (439 aa).

Residues 1 to 76 are Lumenal-facing; the sequence is MSQDLIETTA…NGNTWSFTQG (76 aa). A helical membrane pass occupies residues 77–97; that stretch reads LVIGQVSVIFIIIVFVKFFVF. The Cytoplasmic segment spans residues 98-439; that stretch reads ADSSSHIPTK…TPGEYVNSNI (342 aa). Disordered stretches follow at residues 125–145, 309–336, and 405–425; these read KHSN…SLDS, MNGY…DGGT, and REPV…GTSA. Residues 165–395 enclose the SMP-LTD domain; sequence ASESLDWFNV…EPRFQVVRLP (231 aa). Composition is skewed to low complexity over residues 315-326 and 410-424; these read ENANGDGASSSN and KKTT…NGTS.

Belongs to the MMM1 family. As to quaternary structure, homodimer. Component of the ER-mitochondria encounter structure (ERMES) or MDM complex, composed of MMM1, MDM10, MDM12 and MDM34. An MMM1 homodimer associates with one molecule of MDM12 on each side in a pairwise head-to-tail manner, and the SMP-LTD domains of MMM1 and MDM12 generate a continuous hydrophobic tunnel for phospholipid trafficking.

It localises to the endoplasmic reticulum membrane. In terms of biological role, component of the ERMES/MDM complex, which serves as a molecular tether to connect the endoplasmic reticulum (ER) and mitochondria. Components of this complex are involved in the control of mitochondrial shape and protein biogenesis, and function in nonvesicular lipid trafficking between the ER and mitochondria. The MDM12-MMM1 subcomplex functions in the major beta-barrel assembly pathway that is responsible for biogenesis of all outer membrane beta-barrel proteins, and acts in a late step after the SAM complex. The MDM10-MDM12-MMM1 subcomplex further acts in the TOM40-specific pathway after the action of the MDM12-MMM1 complex. Essential for establishing and maintaining the structure of mitochondria and maintenance of mtDNA nucleoids. The sequence is that of Maintenance of mitochondrial morphology protein 1 from Candida albicans (strain WO-1) (Yeast).